The chain runs to 541 residues: Formimidoyltransferase-cyclodeaminase (541 aa).

The segment at 1–181 (MSQLVECVPN…GATVTGARKF (181 aa)) is formiminotransferase N-subdomain. His-82 (for formimidoyltransferase activity) is an active-site residue. 163–172 (GPSSFVPSWG) contributes to the folate binding site. A formiminotransferase C-subdomain region spans residues 182 to 326 (LIAFNINLLS…PKERIIEYLV (145 aa)). The segment at 327–334 (PDSGPEQS) is linker. The tract at residues 335-541 (LLDASLRAFV…VLGSLEARKE (207 aa)) is cyclodeaminase/cyclohydrolase. The active-site For cyclodeaminase activity is the Asp-412. Residue Ser-520 is modified to Phosphoserine.

This sequence in the C-terminal section; belongs to the cyclodeaminase/cyclohydrolase family. The protein in the N-terminal section; belongs to the formiminotransferase family. As to quaternary structure, homooctamer, including four polyglutamate binding sites. The subunits are arranged as a tetramer of dimers, and form a planar ring-shaped structure. Specifically expressed in liver (at protein level).

Its subcellular location is the cytoplasm. It localises to the cytosol. It is found in the golgi apparatus. The protein localises to the cytoskeleton. The protein resides in the microtubule organizing center. Its subcellular location is the centrosome. It localises to the centriole. It carries out the reaction 5-formimidoyltetrahydrofolate + L-glutamate = N-formimidoyl-L-glutamate + (6S)-5,6,7,8-tetrahydrofolate. The enzyme catalyses 5-formimidoyltetrahydrofolate + 2 H(+) = (6R)-5,10-methenyltetrahydrofolate + NH4(+). Its pathway is amino-acid degradation; L-histidine degradation into L-glutamate; L-glutamate from N-formimidoyl-L-glutamate (transferase route): step 1/1. Its function is as follows. Folate-dependent enzyme, that displays both transferase and deaminase activity. Serves to channel one-carbon units from formiminoglutamate to the folate pool. In terms of biological role, binds and promotes bundling of vimentin filaments originating from the Golgi. In Rattus norvegicus (Rat), this protein is Formimidoyltransferase-cyclodeaminase (Ftcd).